The chain runs to 155 residues: Endoribonuclease YbeY (155 aa).

Zn(2+) is bound by residues His-114, His-118, and His-124.

Belongs to the endoribonuclease YbeY family. The cofactor is Zn(2+).

The protein resides in the cytoplasm. Its function is as follows. Single strand-specific metallo-endoribonuclease involved in late-stage 70S ribosome quality control and in maturation of the 3' terminus of the 16S rRNA. The chain is Endoribonuclease YbeY from Shigella flexneri serotype 5b (strain 8401).